Reading from the N-terminus, the 336-residue chain is Ribosomal RNA large subunit methyltransferase F (336 aa).

It belongs to the methyltransferase superfamily. METTL16/RlmF family.

It is found in the cytoplasm. The catalysed reaction is adenosine(1618) in 23S rRNA + S-adenosyl-L-methionine = N(6)-methyladenosine(1618) in 23S rRNA + S-adenosyl-L-homocysteine + H(+). Functionally, specifically methylates the adenine in position 1618 of 23S rRNA. The sequence is that of Ribosomal RNA large subunit methyltransferase F from Yersinia pestis bv. Antiqua (strain Nepal516).